Reading from the N-terminus, the 386-residue chain is Protein phosphatase methylesterase 1 (386 aa).

Positions 1 to 38 are disordered; the sequence is MSALEKSMHLGRLPSRPPLPGSGGSQSGAKMRMGPGRK. Ser-15 carries the post-translational modification Phosphoserine. Residue Arg-16 is modified to Asymmetric dimethylarginine; alternate. Position 16 is an omega-N-methylarginine; alternate (Arg-16). Residue Ser-156 is part of the active site. Residues 255 to 265 show a composition bias toward acidic residues; sequence IEEEEEDEEGS. Residues 255–280 are disordered; it reads IEEEEEDEEGSESVNKRKKEDDMETK. Over residues 268–280 the composition is skewed to basic and acidic residues; that stretch reads VNKRKKEDDMETK. Residue His-349 is part of the active site.

It belongs to the AB hydrolase superfamily. In terms of assembly, binds PPP2CA and PPP2CB. Post-translationally, phosphorylated by SIK1 following increases in intracellular sodium, leading to dissociation from the protein phosphatase 2A (PP2A) complex and subsequent dephosphorylation of sodium/potassium-transporting ATPase ATP1A1.

The enzyme catalyses [phosphatase 2A protein]-C-terminal L-leucine methyl ester + H2O = [phosphatase 2A protein]-C-terminal L-leucine + methanol + H(+). In terms of biological role, demethylates proteins that have been reversibly carboxymethylated. Demethylates PPP2CB (in vitro) and PPP2CA. Binding to PPP2CA displaces the manganese ion and inactivates the enzyme. This is Protein phosphatase methylesterase 1 (Ppme1) from Rattus norvegicus (Rat).